A 340-amino-acid chain; its full sequence is MANIYYENHADLARLAGRTIAVIGFGSQGHAHALNLKESGCDVIVGLYQGSKSWSKAEGLGLKVLPVAEAAKEAQIVMLALPDTAQAAIYRDAIGPHMTPGKTLMFAHGFNIRFGQIVPPEGVDVSMVAPKAPGHRVREVYTQGGGVPALVAVHQDASGNALADALAYARGLGCTRAGVIETTFAEETETDLFGEQVVLCGGVSALVKAAFETLVEAGYQPEVAYFECMHELKLIVDLFYQGGLNYMRYSVSDTAEWGDYTAGPKIITDETRATMKRILADIQSGAFAEDWIEENHNGRPRFNAYRTRDIAHPIEQVGRELRRMMPFVNPREVVPGEGGA.

One can recognise a KARI N-terminal Rossmann domain in the interval 2-182 (ANIYYENHAD…GCTRAGVIET (181 aa)). Residues 25 to 28 (FGSQ), Ser-51, Ser-53, and 83 to 86 (DTAQ) contribute to the NADP(+) site. His-108 is a catalytic residue. Gly-134 lines the NADP(+) pocket. One can recognise a KARI C-terminal knotted domain in the interval 183-328 (TFAEETETDL…RELRRMMPFV (146 aa)). Positions 191, 195, 227, and 231 each coordinate Mg(2+). Ser-252 is a binding site for substrate.

It belongs to the ketol-acid reductoisomerase family. Requires Mg(2+) as cofactor.

It carries out the reaction (2R)-2,3-dihydroxy-3-methylbutanoate + NADP(+) = (2S)-2-acetolactate + NADPH + H(+). It catalyses the reaction (2R,3R)-2,3-dihydroxy-3-methylpentanoate + NADP(+) = (S)-2-ethyl-2-hydroxy-3-oxobutanoate + NADPH + H(+). It functions in the pathway amino-acid biosynthesis; L-isoleucine biosynthesis; L-isoleucine from 2-oxobutanoate: step 2/4. Its pathway is amino-acid biosynthesis; L-valine biosynthesis; L-valine from pyruvate: step 2/4. Functionally, involved in the biosynthesis of branched-chain amino acids (BCAA). Catalyzes an alkyl-migration followed by a ketol-acid reduction of (S)-2-acetolactate (S2AL) to yield (R)-2,3-dihydroxy-isovalerate. In the isomerase reaction, S2AL is rearranged via a Mg-dependent methyl migration to produce 3-hydroxy-3-methyl-2-ketobutyrate (HMKB). In the reductase reaction, this 2-ketoacid undergoes a metal-dependent reduction by NADPH to yield (R)-2,3-dihydroxy-isovalerate. This is Ketol-acid reductoisomerase (NADP(+)) from Roseiflexus castenholzii (strain DSM 13941 / HLO8).